Reading from the N-terminus, the 378-residue chain is Anhydro-N-acetylmuramic acid kinase (378 aa).

Residue 9–16 (GTSVDGID) coordinates ATP.

This sequence belongs to the anhydro-N-acetylmuramic acid kinase family.

It catalyses the reaction 1,6-anhydro-N-acetyl-beta-muramate + ATP + H2O = N-acetyl-D-muramate 6-phosphate + ADP + H(+). The protein operates within amino-sugar metabolism; 1,6-anhydro-N-acetylmuramate degradation. It functions in the pathway cell wall biogenesis; peptidoglycan recycling. In terms of biological role, catalyzes the specific phosphorylation of 1,6-anhydro-N-acetylmuramic acid (anhMurNAc) with the simultaneous cleavage of the 1,6-anhydro ring, generating MurNAc-6-P. Is required for the utilization of anhMurNAc either imported from the medium or derived from its own cell wall murein, and thus plays a role in cell wall recycling. The protein is Anhydro-N-acetylmuramic acid kinase of Microcystis aeruginosa (strain NIES-843 / IAM M-2473).